Reading from the N-terminus, the 65-residue chain is Large ribosomal subunit protein bL28 (65 aa).

The disordered stretch occupies residues 1–21; the sequence is MPGRDQLTGQKALSGNKRSHA.

The protein belongs to the bacterial ribosomal protein bL28 family.

This chain is Large ribosomal subunit protein bL28, found in Metamycoplasma arthritidis (strain 158L3-1) (Mycoplasma arthritidis).